Here is a 185-residue protein sequence, read N- to C-terminus: MKLIGITGMPGSGKSAIINLAKENNIPVVSMGDIVRHETLKQGLILNPENVGKTAIFLRKLHGKEAIVVPCLKYIFEKYKNEKFVVIEGIRSIYEVNYLKKHVFLEIIAIHSSPKTRFERLSARNREDDSNSLDTFIERDNRELDFSIGSVISLADYVVVNEEEYDKFLENLNSLLKKIIMNVDE.

8–15 (GMPGSGKS) provides a ligand contact to ATP.

It belongs to the UPF0200 family.

The sequence is that of UPF0200 protein Mevan_0592 from Methanococcus vannielii (strain ATCC 35089 / DSM 1224 / JCM 13029 / OCM 148 / SB).